Consider the following 470-residue polypeptide: Myricetin 3-O-rhamnoside 1,2-glucosyltransferase UGT709G2 (470 aa).

Histidine 20 serves as the catalytic Proton acceptor. Histidine 20 contacts an anthocyanidin. Aspartate 117 (charge relay) is an active-site residue. Residues alanine 340, glutamine 342, histidine 357, tryptophan 360, asparagine 361, serine 362, and glutamate 365 each coordinate UDP-alpha-D-glucose. Position 380 (alanine 380) interacts with an anthocyanidin. Residues aspartate 381 and glutamine 382 each contribute to the UDP-alpha-D-glucose site.

The protein belongs to the UDP-glycosyltransferase family. Expressed in young cromes.

The catalysed reaction is myricetin 3-O-alpha-L-rhamnoside + UDP-alpha-D-glucose = myricetin 3-O-[beta-D-glucosyl-(1-&gt;2)-alpha-L-rhamnoside] + UDP + H(+). Its pathway is flavonoid metabolism. Its function is as follows. Glucosyltransferase involved in montbretin A (MbA) biosynthesis. Catalyzes the glucosylation of myricetin 3-O-alpha-L-rhamnoside (MR) to produce myricetin 3-O-[beta-D-glucosyl-(1-&gt;2)-alpha-L-rhamnoside] (MRG), a precursor of MbA. MbA is a potent inhibitor of human pancreatic alpha-amylase and is being developed as drug candidate to treat type-2 diabetes. In vitro, is able to transfer UDP-xylose with 50-fold less efficiency compared with UDP-glucose. In vitro, can use myricetin 3-O-glucoside and quercetin 3-O-glucoside as substrates, although these two flavonoids may not be physiological substrates in vivo. The polypeptide is Myricetin 3-O-rhamnoside 1,2-glucosyltransferase UGT709G2 (Crocosmia x crocosmiiflora (Montbretia)).